The sequence spans 94 residues: Protein translocase subunit SecE (94 aa).

A disordered region spans residues Met-1 to Lys-32. Residues Lys-22–Lys-32 are compositionally biased toward basic residues. The chain crosses the membrane as a helical span at residues Gln-59–Ile-81.

It belongs to the SecE/SEC61-gamma family. In terms of assembly, component of the Sec protein translocase complex. Heterotrimer consisting of SecY, SecE and SecG subunits. The heterotrimers can form oligomers, although 1 heterotrimer is thought to be able to translocate proteins. Interacts with the ribosome. Interacts with SecDF, and other proteins may be involved. Interacts with SecA.

It is found in the cell membrane. Functionally, essential subunit of the Sec protein translocation channel SecYEG. Clamps together the 2 halves of SecY. May contact the channel plug during translocation. The protein is Protein translocase subunit SecE of Streptomyces galbus.